The primary structure comprises 86 residues: Triosephosphate isomerase (86 aa).

E62 functions as the Proton acceptor in the catalytic mechanism.

This sequence belongs to the triosephosphate isomerase family. As to quaternary structure, homodimer.

The catalysed reaction is D-glyceraldehyde 3-phosphate = dihydroxyacetone phosphate. It participates in carbohydrate biosynthesis; gluconeogenesis. Its pathway is carbohydrate degradation; glycolysis; D-glyceraldehyde 3-phosphate from glycerone phosphate: step 1/1. The chain is Triosephosphate isomerase from Platanus orientalis (Oriental plane-tree).